Consider the following 920-residue polypeptide: Plasma membrane ATPase (920 aa).

A disordered region spans residues 1–77; that stretch reads MADHSASGAP…TPGGGRVVPE (77 aa). Topologically, residues 1 to 115 are cytoplasmic; the sequence is MADHSASGAP…KEEKENHFLK (115 aa). Acidic residues predominate over residues 38 to 51; the sequence is EDDEDEDIDALIED. Residues 116–138 traverse the membrane as a helical segment; the sequence is FLGFFVGPIQFVMEGAAVLAAGL. The Extracellular portion of the chain corresponds to 139-140; that stretch reads ED. Residues 141 to 160 form a helical membrane-spanning segment; the sequence is WVDFGVICGLLLLNAVVGFV. At 161-291 the chain is on the cytoplasmic side; it reads QEFQAGSIVD…GSGHFTEVLN (131 aa). Residues 292–314 form a helical membrane-spanning segment; the sequence is GIGTILLILVIFTLLIVWVSSFY. The Extracellular segment spans residues 315-321; that stretch reads RSNPIVQ. The chain crosses the membrane as a helical span at residues 322–354; it reads ILEFTLAITIIGVPVGLPAVVTTTMAVGAAYLA. Residues 355 to 687 are Cytoplasmic-facing; sequence KKKAIVQKLS…LKTSRQIFHR (333 aa). Catalysis depends on aspartate 378, which acts as the 4-aspartylphosphate intermediate. Mg(2+) contacts are provided by aspartate 634 and aspartate 638. A helical transmembrane segment spans residues 688–713; the sequence is MYAYVVYRIALSIHLEIFLGLWIAIL. The Extracellular portion of the chain corresponds to 714–720; that stretch reads NRSLNIE. The helical transmembrane segment at 721 to 738 threads the bilayer; the sequence is LVVFIAIFADVATLAIAY. At 739 to 754 the chain is on the cytoplasmic side; the sequence is DNAPYSQTPVKWNLPK. A helical membrane pass occupies residues 755–779; it reads LWGMSVLLGVVLAVGTWITVTTMYA. Residues 780–806 are Extracellular-facing; it reads QGENGGIVQNFGNMDEVLFLQISLTEN. 2 helical membrane passes run 807–826 and 827–847; these read WLIF…PSWQ and LSGA…WGWF. Over 848–853 the chain is Extracellular; the sequence is EHSDTS. Residues 854–878 form a helical membrane-spanning segment; it reads IVAVVRIWIFSFGIFCIMGGVYYIL. Residues 879 to 920 are Cytoplasmic-facing; the sequence is QDSVGFDNLMHGKSPKGNQKQRSLEDFVVSLQRVSTQHEKSQ.

It belongs to the cation transport ATPase (P-type) (TC 3.A.3) family. Type IIIA subfamily.

The protein localises to the cell membrane. It catalyses the reaction ATP + H2O + H(+)(in) = ADP + phosphate + 2 H(+)(out). Functionally, the plasma membrane ATPase of plants and fungi is a hydrogen ion pump. The proton gradient it generates drives the active transport of nutrients by H(+)-symport. The resulting external acidification and/or internal alkinization may mediate growth responses. This chain is Plasma membrane ATPase (pma-1), found in Neurospora crassa (strain ATCC 24698 / 74-OR23-1A / CBS 708.71 / DSM 1257 / FGSC 987).